The chain runs to 423 residues: Gamma-glutamyl phosphate reductase (423 aa).

Belongs to the gamma-glutamyl phosphate reductase family.

The protein localises to the cytoplasm. It carries out the reaction L-glutamate 5-semialdehyde + phosphate + NADP(+) = L-glutamyl 5-phosphate + NADPH + H(+). It functions in the pathway amino-acid biosynthesis; L-proline biosynthesis; L-glutamate 5-semialdehyde from L-glutamate: step 2/2. In terms of biological role, catalyzes the NADPH-dependent reduction of L-glutamate 5-phosphate into L-glutamate 5-semialdehyde and phosphate. The product spontaneously undergoes cyclization to form 1-pyrroline-5-carboxylate. The protein is Gamma-glutamyl phosphate reductase of Pseudomonas putida (strain GB-1).